A 130-amino-acid polypeptide reads, in one-letter code: Sec-independent protein translocase protein TatB (130 aa).

A helical transmembrane segment spans residues 1 to 21 (MFDISFTELIVIGIVALVVIG). Residues 70 to 130 (VDSFQNSVHS…TPKEPRQSGS (61 aa)) are disordered. Composition is skewed to basic and acidic residues over residues 80–89 (EINKIQETAD) and 96–111 (PEKE…KTEP).

This sequence belongs to the TatB family. The Tat system comprises two distinct complexes: a TatABC complex, containing multiple copies of TatA, TatB and TatC subunits, and a separate TatA complex, containing only TatA subunits. Substrates initially bind to the TatABC complex, which probably triggers association of the separate TatA complex to form the active translocon.

It localises to the cell inner membrane. In terms of biological role, part of the twin-arginine translocation (Tat) system that transports large folded proteins containing a characteristic twin-arginine motif in their signal peptide across membranes. Together with TatC, TatB is part of a receptor directly interacting with Tat signal peptides. TatB may form an oligomeric binding site that transiently accommodates folded Tat precursor proteins before their translocation. The sequence is that of Sec-independent protein translocase protein TatB from Nitrosomonas eutropha (strain DSM 101675 / C91 / Nm57).